A 360-amino-acid chain; its full sequence is Mitogen-activated protein kinase 1 (360 aa).

Ala-2 is modified (N-acetylalanine). The Protein kinase domain maps to 25 to 313 (YTNLSYIGEG…VEQALAHPYL (289 aa)). Residue Ser-29 is modified to Phosphoserine; by SGK1. ATP contacts are provided by residues 31-39 (IGEGAYGMV) and Lys-54. Asp-149 (proton acceptor) is an active-site residue. Thr-185 bears the Phosphothreonine; by MAP2K1 and MAP2K2 mark. Positions 185–187 (TEY) match the TXY motif. Position 187 is a phosphotyrosine; by MAP2K1 and MAP2K2 (Tyr-187). Position 190 is a phosphothreonine; by autocatalysis (Thr-190). Phosphoserine occurs at positions 246 and 248. Residues 259–277 (KARNYLLSLPHKNKVPWNR) mediate DNA binding. Phosphoserine is present on Ser-284. The Cytoplasmic retention motif signature appears at 318 to 322 (DPSDE). The Nuclear translocation motif signature appears at 327-333 (APFKFDM).

Belongs to the protein kinase superfamily. CMGC Ser/Thr protein kinase family. MAP kinase subfamily. As to quaternary structure, binds both upstream activators and downstream substrates in multimolecular complexes. This interaction inhibits its tyrosine-kinase activity. Interacts with ADAM15, ARHGEF2, ARRB2, DAPK1 (via death domain), HSF4, IER3, IPO7, NISCH, SGK1, and isoform 1 of NEK2. Interacts (via phosphorylated form) with TPR (via C-terminal region and phosphorylated form); the interaction requires dimerization of MAPK1/ERK2 and increases following EGF stimulation. Interacts with MAP2K1. Interacts with DUSP6. Interacts (phosphorylated form) with CAV2 ('Tyr-19'-phosphorylated form); the interaction, promoted by insulin, leads to nuclear location and MAPK1 activation. Interacts with MORG1, PEA15 and MKNK2. MKNK2 isoform 1 binding prevents from dephosphorylation and inactivation. Interacts with DCC. The phosphorylated form interacts with PML (isoform PML-4). Interacts with STYX. Interacts with CDK2AP2. Interacts with CAVIN4. Interacts with DUSP7; the interaction enhances DUSP7 phosphatase activity. Interacts with GIT1; this interaction is necessary for MAPK1 localization to focal adhesions. Interacts with ZNF263. Interacts with phosphoglycerate kinase PGK1; the interaction is direct, occurs under hypoxic conditions, and promotes interaction between PGK1 and PIN1. (Microbial infection) Interacts with HIV-1 Nef through its SH3 domain. Requires Mg(2+) as cofactor. In terms of processing, phosphorylated upon KIT and FLT3 signaling. Dually phosphorylated on Thr-185 and Tyr-187, which activates the enzyme. Undergoes regulatory phosphorylation on additional residues such as Ser-246 and Ser-248 in the kinase insert domain (KID) These phosphorylations, which are probably mediated by more than one kinase, are important for binding of MAPK1/ERK2 to importin-7 (IPO7) and its nuclear translocation. In addition, autophosphorylation of Thr-190 was shown to affect the subcellular localization of MAPK1/ERK2 as well. Ligand-activated ALK induces tyrosine phosphorylation. Dephosphorylated by PTPRJ at Tyr-187. Phosphorylation on Ser-29 by SGK1 results in its activation by enhancing its interaction with MAP2K1/MEK1 and MAP2K2/MEK2. DUSP3 and DUSP6 dephosphorylate specifically MAPK1/ERK2 and MAPK3/ERK1 whereas DUSP9 dephosphorylates a broader range of MAPKs. Dephosphorylated by DUSP1 and DUSP2 at Thr-185 and Tyr-187. Post-translationally, ISGylated. Ubiquitinated by TRIM15 via 'Lys-63'-linked ubiquitination; leading to activation. Deubiquitinated by CYLD.

The protein resides in the cytoplasm. Its subcellular location is the cytoskeleton. It localises to the spindle. It is found in the nucleus. The protein localises to the microtubule organizing center. The protein resides in the centrosome. Its subcellular location is the membrane. It localises to the caveola. It is found in the cell junction. The protein localises to the focal adhesion. It catalyses the reaction L-seryl-[protein] + ATP = O-phospho-L-seryl-[protein] + ADP + H(+). The enzyme catalyses L-threonyl-[protein] + ATP = O-phospho-L-threonyl-[protein] + ADP + H(+). Its activity is regulated as follows. Phosphorylated by MAP2K1/MEK1 and MAP2K2/MEK2 on Thr-185 and Tyr-187 in response to external stimuli like insulin or NGF. Both phosphorylations are required for activity. This phosphorylation causes dramatic conformational changes, which enable full activation and interaction of MAPK1/ERK2 with its substrates. Phosphorylation on Ser-29 by SGK1 results in its activation by enhancing its interaction with MAP2K1/MEK1 and MAP2K2/MEK2. Dephosphorylated and inactivated by DUSP1, DUSP3, DUSP6 and DUSP9. Inactivated by pyrimidylpyrrole inhibitors. Functionally, serine/threonine kinase which acts as an essential component of the MAP kinase signal transduction pathway. MAPK1/ERK2 and MAPK3/ERK1 are the 2 MAPKs which play an important role in the MAPK/ERK cascade. They participate also in a signaling cascade initiated by activated KIT and KITLG/SCF. Depending on the cellular context, the MAPK/ERK cascade mediates diverse biological functions such as cell growth, adhesion, survival and differentiation through the regulation of transcription, translation, cytoskeletal rearrangements. The MAPK/ERK cascade also plays a role in initiation and regulation of meiosis, mitosis, and postmitotic functions in differentiated cells by phosphorylating a number of transcription factors. About 160 substrates have already been discovered for ERKs. Many of these substrates are localized in the nucleus, and seem to participate in the regulation of transcription upon stimulation. However, other substrates are found in the cytosol as well as in other cellular organelles, and those are responsible for processes such as translation, mitosis and apoptosis. Moreover, the MAPK/ERK cascade is also involved in the regulation of the endosomal dynamics, including lysosome processing and endosome cycling through the perinuclear recycling compartment (PNRC); as well as in the fragmentation of the Golgi apparatus during mitosis. The substrates include transcription factors (such as ATF2, BCL6, ELK1, ERF, FOS, HSF4 or SPZ1), cytoskeletal elements (such as CANX, CTTN, GJA1, MAP2, MAPT, PXN, SORBS3 or STMN1), regulators of apoptosis (such as BAD, BTG2, CASP9, DAPK1, IER3, MCL1 or PPARG), regulators of translation (such as EIF4EBP1 and FXR1) and a variety of other signaling-related molecules (like ARHGEF2, DCC, FRS2 or GRB10). Protein kinases (such as RAF1, RPS6KA1/RSK1, RPS6KA3/RSK2, RPS6KA2/RSK3, RPS6KA6/RSK4, SYK, MKNK1/MNK1, MKNK2/MNK2, RPS6KA5/MSK1, RPS6KA4/MSK2, MAPKAPK3 or MAPKAPK5) and phosphatases (such as DUSP1, DUSP4, DUSP6 or DUSP16) are other substrates which enable the propagation the MAPK/ERK signal to additional cytosolic and nuclear targets, thereby extending the specificity of the cascade. Mediates phosphorylation of TPR in response to EGF stimulation. May play a role in the spindle assembly checkpoint. Phosphorylates PML and promotes its interaction with PIN1, leading to PML degradation. Phosphorylates CDK2AP2. Phosphorylates phosphoglycerate kinase PGK1 under hypoxic conditions to promote its targeting to the mitochondrion and suppress the formation of acetyl-coenzyme A from pyruvate. In terms of biological role, acts as a transcriptional repressor. Binds to a [GC]AAA[GC] consensus sequence. Repress the expression of interferon gamma-induced genes. Seems to bind to the promoter of CCL5, DMP1, IFIH1, IFITM1, IRF7, IRF9, LAMP3, OAS1, OAS2, OAS3 and STAT1. Transcriptional activity is independent of kinase activity. The polypeptide is Mitogen-activated protein kinase 1 (Homo sapiens (Human)).